The following is a 365-amino-acid chain: Oligosaccharides import ATP-binding protein MsmX (365 aa).

The 232-residue stretch at 4 to 235 folds into the ABC transporter domain; the sequence is LRMEHIYKFY…PENVFVGGFI (232 aa). 37–44 lines the ATP pocket; the sequence is GPSGCGKS.

This sequence belongs to the ABC transporter superfamily. In terms of assembly, the complex involved in maltodextrin import is composed of two ATP-binding proteins (MsmX), two transmembrane proteins (MdxF and MdxG) and a solute-binding protein (MdxE). The complex involved in arabinooligosaccharides uptake is composed of two ATP-binding proteins (MsmX), two transmembrane proteins (AraP and AraQ) and a solute-binding protein (AraN). The complex involved in galactooligosaccharides uptake is composed of two ATP-binding proteins (MsmX), two transmembrane proteins (GanP and GanQ) and a solute-binding protein (GanS). The complex involved in melibiose, raffinose and stachyose import is composed of two ATP-binding proteins (MsmX), two transmembrane proteins (MelC and MelD) and a solute-binding protein (MelE). The complex involved in polygalacturonan and rhamnogalacturonan type I uptake is probably composed of two ATP-binding proteins (MsmX), two transmembrane proteins (YtcP and YteP) and a solute-binding protein (YtcQ).

It localises to the cell membrane. Its function is as follows. Required to energize different ABC-type saccharide transporters. Part of the MdxEFG-MsmX ABC transporter complex involved in maltodextrin import, of the AraNPQ-MsmX complex involved in arabinooligosaccharides import, of the GanPQS-MsmX complex involved in galactooligosaccharides import, and of the MelEDC-MsmX complex involved in melibiose, raffinose and stachyose import. Is probably also part of the ABC transporter complex YtcQP-YteP-MsmX involved in polygalacturonan and rhamnogalacturonan type I import during pectin degradation. Responsible for energy coupling to the transport system. This is Oligosaccharides import ATP-binding protein MsmX (msmX) from Bacillus subtilis (strain 168).